The following is a 602-amino-acid chain: Potassium-transporting ATPase potassium-binding subunit (602 aa).

10 helical membrane-spanning segments follow: residues 3–23 (ANNLLQAAIFIVVLIAAAVPV), 64–84 (QYALATVAFNALGVLFLYALL), 135–155 (GLTVQNFLSAATGIVVVLALI), 178–198 (LYVLVPMAAIIAALLMSQGVI), 282–302 (FSNFLEIFAILIIPAALCLVF), 313–333 (VAVLAAMTVALAAAIGIETSA), 418–438 (GLYGMLVFALLAVFVAGLMIG), 456–476 (VSIVVLLTPLLVLVGTSIAVL), 522–542 (WMTAIAMWFGRFGTIVPVLAI), and 565–585 (LFVVLLLGTVLLVGALTYMPA).

This sequence belongs to the KdpA family. In terms of assembly, the system is composed of three essential subunits: KdpA, KdpB and KdpC.

It localises to the cell inner membrane. In terms of biological role, part of the high-affinity ATP-driven potassium transport (or Kdp) system, which catalyzes the hydrolysis of ATP coupled with the electrogenic transport of potassium into the cytoplasm. This subunit binds the periplasmic potassium ions and delivers the ions to the membrane domain of KdpB through an intramembrane tunnel. This chain is Potassium-transporting ATPase potassium-binding subunit, found in Burkholderia mallei (strain ATCC 23344).